A 304-amino-acid chain; its full sequence is Quinolinate synthase (304 aa).

Iminosuccinate is bound by residues histidine 24 and serine 41. Cysteine 86 provides a ligand contact to [4Fe-4S] cluster. Iminosuccinate is bound by residues 112 to 114 (YVN) and serine 129. Cysteine 171 is a [4Fe-4S] cluster binding site. Iminosuccinate contacts are provided by residues 197–199 (HPE) and threonine 214. Cysteine 259 is a binding site for [4Fe-4S] cluster.

This sequence belongs to the quinolinate synthase family. Type 2 subfamily. It depends on [4Fe-4S] cluster as a cofactor.

It localises to the cytoplasm. It catalyses the reaction iminosuccinate + dihydroxyacetone phosphate = quinolinate + phosphate + 2 H2O + H(+). The protein operates within cofactor biosynthesis; NAD(+) biosynthesis; quinolinate from iminoaspartate: step 1/1. Functionally, catalyzes the condensation of iminoaspartate with dihydroxyacetone phosphate to form quinolinate. This Geobacter metallireducens (strain ATCC 53774 / DSM 7210 / GS-15) protein is Quinolinate synthase.